A 505-amino-acid polypeptide reads, in one-letter code: Alkylglycerol monooxygenase (505 aa).

2 consecutive transmembrane segments (helical) span residues 56 to 76 and 104 to 124; these read VSAW…ISGH and AVAI…ELPW. Residues 130–262 form the Fatty acid hydroxylase domain; sequence WIFCLFFQDF…FIIWDKMFNT (133 aa). Positions 145–149 match the Histidine box-1 motif; the sequence is HRAVH. Residues 158 to 162 carry the Histidine box-2 motif; it reads HTIHH. Positions 234 to 238 match the Histidine box-3 motif; sequence HRVHH. 4 helical membrane passes run 366–386, 396–416, 430–450, and 452–472; these read ILVK…FFHF, LDCT…GAFF, CCGV…AGTH, and LFVI…VLVE.

The protein belongs to the sterol desaturase family. TMEM195 subfamily. Fe cation is required as a cofactor.

It localises to the endoplasmic reticulum membrane. It carries out the reaction 1-O-(1,2-saturated-alkyl)-sn-glycerol + (6R)-L-erythro-5,6,7,8-tetrahydrobiopterin + O2 = a 1-(1-hydroxyalkyl)-sn-glycerol + (6R)-L-erythro-6,7-dihydrobiopterin + H2O. In terms of biological role, glyceryl-ether monooxygenase that cleaves the O-alkyl bond of ether lipids. The protein is Alkylglycerol monooxygenase of Caenorhabditis elegans.